The sequence spans 218 residues: Small ribosomal subunit protein uS3 (218 aa).

Residues 39–107 (IRDYIKSKLL…QISINIVEIK (69 aa)) enclose the KH type-2 domain.

This sequence belongs to the universal ribosomal protein uS3 family. In terms of assembly, part of the 30S ribosomal subunit. Forms a tight complex with proteins S10 and S14.

Functionally, binds the lower part of the 30S subunit head. Binds mRNA in the 70S ribosome, positioning it for translation. In Desulforudis audaxviator (strain MP104C), this protein is Small ribosomal subunit protein uS3.